The sequence spans 62 residues: Small ribosomal subunit protein bS21 (62 aa).

Residues 40 to 52 (KPSVKRKLKSEAA) show a composition bias toward basic and acidic residues. The disordered stretch occupies residues 40-62 (KPSVKRKLKSEAARKRKNKRRRY). Over residues 53-62 (RKRKNKRRRY) the composition is skewed to basic residues.

Belongs to the bacterial ribosomal protein bS21 family.

This is Small ribosomal subunit protein bS21 from Limosilactobacillus fermentum (strain NBRC 3956 / LMG 18251) (Lactobacillus fermentum).